The primary structure comprises 138 residues: ATP synthase epsilon chain (138 aa).

It belongs to the ATPase epsilon chain family. F-type ATPases have 2 components, CF(1) - the catalytic core - and CF(0) - the membrane proton channel. CF(1) has five subunits: alpha(3), beta(3), gamma(1), delta(1), epsilon(1). CF(0) has three main subunits: a, b and c.

It localises to the cell inner membrane. In terms of biological role, produces ATP from ADP in the presence of a proton gradient across the membrane. The polypeptide is ATP synthase epsilon chain (Geobacter sp. (strain M21)).